The sequence spans 161 residues: 2-C-methyl-D-erythritol 2,4-cyclodiphosphate synthase (161 aa).

Residues D9 and H11 each coordinate a divalent metal cation. Residues D9–H11 and H37–S38 each bind 4-CDP-2-C-methyl-D-erythritol 2-phosphate. H45 contacts a divalent metal cation. 4-CDP-2-C-methyl-D-erythritol 2-phosphate contacts are provided by residues D59–G61, F64–D68, T135–E138, and R145.

This sequence belongs to the IspF family. In terms of assembly, homotrimer. Requires a divalent metal cation as cofactor.

The enzyme catalyses 4-CDP-2-C-methyl-D-erythritol 2-phosphate = 2-C-methyl-D-erythritol 2,4-cyclic diphosphate + CMP. It participates in isoprenoid biosynthesis; isopentenyl diphosphate biosynthesis via DXP pathway; isopentenyl diphosphate from 1-deoxy-D-xylulose 5-phosphate: step 4/6. Functionally, involved in the biosynthesis of isopentenyl diphosphate (IPP) and dimethylallyl diphosphate (DMAPP), two major building blocks of isoprenoid compounds. Catalyzes the conversion of 4-diphosphocytidyl-2-C-methyl-D-erythritol 2-phosphate (CDP-ME2P) to 2-C-methyl-D-erythritol 2,4-cyclodiphosphate (ME-CPP) with a corresponding release of cytidine 5-monophosphate (CMP). The polypeptide is 2-C-methyl-D-erythritol 2,4-cyclodiphosphate synthase (Leptospira borgpetersenii serovar Hardjo-bovis (strain JB197)).